A 234-amino-acid chain; its full sequence is Leucyl/phenylalanyl-tRNA--protein transferase (234 aa).

Belongs to the L/F-transferase family.

It is found in the cytoplasm. The catalysed reaction is N-terminal L-lysyl-[protein] + L-leucyl-tRNA(Leu) = N-terminal L-leucyl-L-lysyl-[protein] + tRNA(Leu) + H(+). The enzyme catalyses N-terminal L-arginyl-[protein] + L-leucyl-tRNA(Leu) = N-terminal L-leucyl-L-arginyl-[protein] + tRNA(Leu) + H(+). It carries out the reaction L-phenylalanyl-tRNA(Phe) + an N-terminal L-alpha-aminoacyl-[protein] = an N-terminal L-phenylalanyl-L-alpha-aminoacyl-[protein] + tRNA(Phe). Its function is as follows. Functions in the N-end rule pathway of protein degradation where it conjugates Leu, Phe and, less efficiently, Met from aminoacyl-tRNAs to the N-termini of proteins containing an N-terminal arginine or lysine. This is Leucyl/phenylalanyl-tRNA--protein transferase from Salmonella paratyphi A (strain ATCC 9150 / SARB42).